A 182-amino-acid polypeptide reads, in one-letter code: Large ribosomal subunit protein uL6 (182 aa).

Belongs to the universal ribosomal protein uL6 family. In terms of assembly, part of the 50S ribosomal subunit.

This protein binds to the 23S rRNA, and is important in its secondary structure. It is located near the subunit interface in the base of the L7/L12 stalk, and near the tRNA binding site of the peptidyltransferase center. The chain is Large ribosomal subunit protein uL6 from Desulforamulus reducens (strain ATCC BAA-1160 / DSM 100696 / MI-1) (Desulfotomaculum reducens).